Here is a 162-residue protein sequence, read N- to C-terminus: ATP synthase subunit b (162 aa).

Residues 16–36 (GISGGTIIYQLLMFIILLALL) traverse the membrane as a helical segment.

It belongs to the ATPase B chain family. As to quaternary structure, F-type ATPases have 2 components, F(1) - the catalytic core - and F(0) - the membrane proton channel. F(1) has five subunits: alpha(3), beta(3), gamma(1), delta(1), epsilon(1). F(0) has three main subunits: a(1), b(2) and c(10-14). The alpha and beta chains form an alternating ring which encloses part of the gamma chain. F(1) is attached to F(0) by a central stalk formed by the gamma and epsilon chains, while a peripheral stalk is formed by the delta and b chains.

The protein resides in the cell membrane. F(1)F(0) ATP synthase produces ATP from ADP in the presence of a proton or sodium gradient. F-type ATPases consist of two structural domains, F(1) containing the extramembraneous catalytic core and F(0) containing the membrane proton channel, linked together by a central stalk and a peripheral stalk. During catalysis, ATP synthesis in the catalytic domain of F(1) is coupled via a rotary mechanism of the central stalk subunits to proton translocation. In terms of biological role, component of the F(0) channel, it forms part of the peripheral stalk, linking F(1) to F(0). This Bacillus caldotenax protein is ATP synthase subunit b.